A 725-amino-acid chain; its full sequence is Ribosomal RNA large subunit methyltransferase K/L (725 aa).

Residues 46–157 (VGYRLCLWSR…KGQAVLSLDL (112 aa)) form the THUMP domain.

This sequence belongs to the methyltransferase superfamily. RlmKL family.

The protein localises to the cytoplasm. It catalyses the reaction guanosine(2445) in 23S rRNA + S-adenosyl-L-methionine = N(2)-methylguanosine(2445) in 23S rRNA + S-adenosyl-L-homocysteine + H(+). The enzyme catalyses guanosine(2069) in 23S rRNA + S-adenosyl-L-methionine = N(2)-methylguanosine(2069) in 23S rRNA + S-adenosyl-L-homocysteine + H(+). In terms of biological role, specifically methylates the guanine in position 2445 (m2G2445) and the guanine in position 2069 (m7G2069) of 23S rRNA. This chain is Ribosomal RNA large subunit methyltransferase K/L, found in Stutzerimonas stutzeri (strain A1501) (Pseudomonas stutzeri).